The primary structure comprises 139 residues: ATP synthase epsilon chain (139 aa).

Belongs to the ATPase epsilon chain family. As to quaternary structure, F-type ATPases have 2 components, CF(1) - the catalytic core - and CF(0) - the membrane proton channel. CF(1) has five subunits: alpha(3), beta(3), gamma(1), delta(1), epsilon(1). CF(0) has three main subunits: a, b and c.

The protein localises to the cell inner membrane. Produces ATP from ADP in the presence of a proton gradient across the membrane. The sequence is that of ATP synthase epsilon chain from Pseudomonas putida (strain ATCC 47054 / DSM 6125 / CFBP 8728 / NCIMB 11950 / KT2440).